The sequence spans 48 residues: Small, acid-soluble spore protein O (48 aa).

The disordered stretch occupies residues 1–48 (MAKRKANHVINGMNNAKRQGNGAGYIENDQHILTEAERQNNKKRKTNQ). The span at 28-40 (NDQHILTEAERQN) shows a compositional bias: basic and acidic residues.

This sequence belongs to the SspO family.

It is found in the spore core. The sequence is that of Small, acid-soluble spore protein O from Bacillus licheniformis (strain ATCC 14580 / DSM 13 / JCM 2505 / CCUG 7422 / NBRC 12200 / NCIMB 9375 / NCTC 10341 / NRRL NRS-1264 / Gibson 46).